The sequence spans 478 residues: Transcript termination protein A18 (478 aa).

Positions 98–254 (KLSTHRPMYM…NDVVNVLKVS (157 aa)) constitute a Helicase ATP-binding domain. ATP is bound at residue 111 to 118 (LSCGFGKT). The DESH box motif lies at 204–207 (DESH). A Helicase C-terminal domain is found at 302–454 (PRNNLIVDTV…IVSVSTDKLG (153 aa)). The disordered stretch occupies residues 456–478 (QQEGKEGTKEEPALTKAFSSQIR). Residues 458-468 (EGKEGTKEEPA) are compositionally biased toward basic and acidic residues.

Belongs to the helicase family. Poxviruses subfamily. As to quaternary structure, interacts with G2. Might be part of a transcription complex composed at least of G2, A18, and H5.

The protein resides in the virion. In terms of biological role, DNA helicase which seems to act as a postreplicative transcription termination factor. Involved in ATP-dependent release of nascent RNA. Forms a stable complex with single-stranded DNA, and to a lesser extent RNA. In Oryctolagus cuniculus (Rabbit), this protein is Transcript termination protein A18.